Consider the following 367-residue polypeptide: UDP-N-acetylglucosamine--N-acetylmuramyl-(pentapeptide) pyrophosphoryl-undecaprenol N-acetylglucosamine transferase (367 aa).

UDP-N-acetyl-alpha-D-glucosamine-binding positions include 13-15 (TGG), Asn125, Arg165, Ser192, and Gln293.

Belongs to the glycosyltransferase 28 family. MurG subfamily.

The protein localises to the cell inner membrane. It carries out the reaction di-trans,octa-cis-undecaprenyl diphospho-N-acetyl-alpha-D-muramoyl-L-alanyl-D-glutamyl-meso-2,6-diaminopimeloyl-D-alanyl-D-alanine + UDP-N-acetyl-alpha-D-glucosamine = di-trans,octa-cis-undecaprenyl diphospho-[N-acetyl-alpha-D-glucosaminyl-(1-&gt;4)]-N-acetyl-alpha-D-muramoyl-L-alanyl-D-glutamyl-meso-2,6-diaminopimeloyl-D-alanyl-D-alanine + UDP + H(+). It functions in the pathway cell wall biogenesis; peptidoglycan biosynthesis. Functionally, cell wall formation. Catalyzes the transfer of a GlcNAc subunit on undecaprenyl-pyrophosphoryl-MurNAc-pentapeptide (lipid intermediate I) to form undecaprenyl-pyrophosphoryl-MurNAc-(pentapeptide)GlcNAc (lipid intermediate II). This chain is UDP-N-acetylglucosamine--N-acetylmuramyl-(pentapeptide) pyrophosphoryl-undecaprenol N-acetylglucosamine transferase, found in Jannaschia sp. (strain CCS1).